The primary structure comprises 527 residues: MTTSTNIHDQRILILDFGSQYTQLIARRIREIGVYCELWSWDVDEADIRDFNPNGIILSGGPESVTGDESPRAPQYVFEAGVPVFGVCYGMQTMAEQLGGKVAGSSMREFGYAQVEIVEPTSFFKNIEDAVAEDGNGLLDVWMSHGDKVVEIPSDFVKVAQTDTCPFAAIANEEKHFYGVQFHPEVTHTRQGMRIIENFVLNICGCENLWTSANIIEDAIANIKEQVGDDEVILGLSGGVDSSVVAMLLHRAIGDKLTCVFVDNGLLRLNEGEQVMDMFGDHFGLNIVHVKAEDRFLNALAGENDPEAKRKIIGHAFIDVFDEESKKLKNAKWLAQGTIYPDVIESAASKNGKAHVIKSHHNVGGLPDDMEMGLVEPLRELFKDEVRKIGLELGLPYNMLYRHPFPGPGLGVRVLGEVKKEYCDLLRRADAIFIEELHSADLYNKVSQAFTVFLPVRSVGVMGDGRKYDWVVSLRAVETIDFMTAHWAHLPYDFLGKVSNRIINEVDGISRVVYDISGKPPATIEWE.

Residues 11 to 209 enclose the Glutamine amidotransferase type-1 domain; the sequence is RILILDFGSQ…VLNICGCENL (199 aa). Cysteine 88 serves as the catalytic Nucleophile. Active-site residues include histidine 183 and glutamate 185. Residues 210–402 enclose the GMPS ATP-PPase domain; that stretch reads WTSANIIEDA…LGLPYNMLYR (193 aa). 237–243 serves as a coordination point for ATP; it reads SGGVDSS.

As to quaternary structure, homodimer.

It catalyses the reaction XMP + L-glutamine + ATP + H2O = GMP + L-glutamate + AMP + diphosphate + 2 H(+). The protein operates within purine metabolism; GMP biosynthesis; GMP from XMP (L-Gln route): step 1/1. Catalyzes the synthesis of GMP from XMP. The sequence is that of GMP synthase [glutamine-hydrolyzing] from Photobacterium profundum (strain SS9).